Here is a 309-residue protein sequence, read N- to C-terminus: Tagatose-6-phosphate kinase (309 aa).

This sequence belongs to the carbohydrate kinase PfkB family. LacC subfamily.

The enzyme catalyses D-tagatofuranose 6-phosphate + ATP = D-tagatofuranose 1,6-bisphosphate + ADP + H(+). It functions in the pathway carbohydrate metabolism; D-tagatose 6-phosphate degradation; D-glyceraldehyde 3-phosphate and glycerone phosphate from D-tagatose 6-phosphate: step 1/2. The polypeptide is Tagatose-6-phosphate kinase (Streptococcus pyogenes serotype M12 (strain MGAS2096)).